An 863-amino-acid polypeptide reads, in one-letter code: Alanine--tRNA ligase (863 aa).

Residues H552, H556, C656, and H660 each coordinate Zn(2+).

It belongs to the class-II aminoacyl-tRNA synthetase family. Zn(2+) serves as cofactor.

The protein localises to the cytoplasm. It catalyses the reaction tRNA(Ala) + L-alanine + ATP = L-alanyl-tRNA(Ala) + AMP + diphosphate. Functionally, catalyzes the attachment of alanine to tRNA(Ala) in a two-step reaction: alanine is first activated by ATP to form Ala-AMP and then transferred to the acceptor end of tRNA(Ala). Also edits incorrectly charged Ser-tRNA(Ala) and Gly-tRNA(Ala) via its editing domain. This Alcanivorax borkumensis (strain ATCC 700651 / DSM 11573 / NCIMB 13689 / SK2) protein is Alanine--tRNA ligase.